The following is a 512-amino-acid chain: Threonine synthase (512 aa).

At K121 the chain carries N6-(pyridoxal phosphate)lysine. Pyridoxal 5'-phosphate-binding residues include G273, N274, F275, D277, and T445.

This sequence belongs to the threonine synthase family. It depends on pyridoxal 5'-phosphate as a cofactor.

It catalyses the reaction O-phospho-L-homoserine + H2O = L-threonine + phosphate. It participates in amino-acid biosynthesis; L-threonine biosynthesis; L-threonine from L-aspartate: step 5/5. Catalyzes the gamma-elimination of phosphate from L-phosphohomoserine and the beta-addition of water to produce L-threonine. The chain is Threonine synthase (THR4) from Eremothecium gossypii (strain ATCC 10895 / CBS 109.51 / FGSC 9923 / NRRL Y-1056) (Yeast).